We begin with the raw amino-acid sequence, 118 residues long: Small ribosomal subunit protein uS13 (118 aa).

The segment at 91-118 is disordered; it reads HRRGLPVRGQRTKTNARTRKGPRKPIKK.

Belongs to the universal ribosomal protein uS13 family. In terms of assembly, part of the 30S ribosomal subunit. Forms a loose heterodimer with protein S19. Forms two bridges to the 50S subunit in the 70S ribosome.

In terms of biological role, located at the top of the head of the 30S subunit, it contacts several helices of the 16S rRNA. In the 70S ribosome it contacts the 23S rRNA (bridge B1a) and protein L5 of the 50S subunit (bridge B1b), connecting the 2 subunits; these bridges are implicated in subunit movement. Contacts the tRNAs in the A and P-sites. The protein is Small ribosomal subunit protein uS13 of Serratia proteamaculans (strain 568).